Here is a 262-residue protein sequence, read N- to C-terminus: ATP synthase subunit a (262 aa).

7 helical membrane passes run 30 to 50 (ITSL…LTIF), 64 to 84 (WNIV…DQIG), 91 to 111 (LIYF…NILG), 123 to 143 (ISVT…IGFS), 149 to 169 (FFSL…LVLI), 195 to 215 (LFGV…SILL), and 220 to 240 (IGLP…VALL).

Belongs to the ATPase A chain family. As to quaternary structure, F-type ATPases have 2 components, CF(1) - the catalytic core - and CF(0) - the membrane proton channel. CF(1) has five subunits: alpha(3), beta(3), gamma(1), delta(1), epsilon(1). CF(0) has three main subunits: a, b and c.

Its subcellular location is the mitochondrion inner membrane. Functionally, mitochondrial membrane ATP synthase (F(1)F(0) ATP synthase or Complex V) produces ATP from ADP in the presence of a proton gradient across the membrane which is generated by electron transport complexes of the respiratory chain. F-type ATPases consist of two structural domains, F(1) - containing the extramembraneous catalytic core and F(0) - containing the membrane proton channel, linked together by a central stalk and a peripheral stalk. During catalysis, ATP synthesis in the catalytic domain of F(1) is coupled via a rotary mechanism of the central stalk subunits to proton translocation. Key component of the proton channel; it may play a direct role in the translocation of protons across the membrane. This is ATP synthase subunit a (ATP6) from Allomyces arbusculus (Aquatic fungus).